A 131-amino-acid polypeptide reads, in one-letter code: UPF0102 protein YraN (131 aa).

The span at 1-19 (MATVPTRSGSPRQLTTKQT) shows a compositional bias: polar residues. The disordered stretch occupies residues 1–20 (MATVPTRSGSPRQLTTKQTG).

Belongs to the UPF0102 family.

The protein is UPF0102 protein YraN of Shigella boydii serotype 18 (strain CDC 3083-94 / BS512).